Here is a 284-residue protein sequence, read N- to C-terminus: MTHNHDPYSDAQALKGLTLGQATQYQAEYDPSLLQGVPRKLNRDAIELTTELPFHGTDIWTGYELSWLNGKGKPVVAILQVHLDIHSVNLIESKSFKLYLNSLNQTRFNNLDAVKDTLTTDLSQCAQGEVTVKIIEPKHFTIERISELPGNCIDDLDIEIFDYQFNPEYLLDSTEEKNVAETLTSNLLKSNCLITSQPDWGSVMIRYQGPKIDREKLLRYLISFRQHNEFHEQCVERIFMDLKQYCHCAKLTVYARYTRRGGLDINPFRSDFEQAPDSHRLARQ.

Residue 91–93 (IES) participates in substrate binding. 93–94 (SK) is an NADPH binding site. Cys-192 acts as the Thioimide intermediate in catalysis. The Proton donor role is filled by Asp-199. 231–232 (HE) contributes to the substrate binding site. NADPH is bound at residue 260–261 (RG).

The protein belongs to the GTP cyclohydrolase I family. QueF type 2 subfamily. As to quaternary structure, homodimer.

The protein resides in the cytoplasm. The enzyme catalyses 7-aminomethyl-7-carbaguanine + 2 NADP(+) = 7-cyano-7-deazaguanine + 2 NADPH + 3 H(+). It participates in tRNA modification; tRNA-queuosine biosynthesis. Its function is as follows. Catalyzes the NADPH-dependent reduction of 7-cyano-7-deazaguanine (preQ0) to 7-aminomethyl-7-deazaguanine (preQ1). This is NADPH-dependent 7-cyano-7-deazaguanine reductase from Shewanella denitrificans (strain OS217 / ATCC BAA-1090 / DSM 15013).